Here is a 684-residue protein sequence, read N- to C-terminus: MGDNSLSNEAITADNILKDAFSQKKQIAATTKADILDLEELKDWQRRKRTEYETVLKRNRLDLRQWMRYAQFEFDQKDIRRARSIYERALLVDHGFIPLWIQYIDSEIKWKNINHARNLLDRATNALPRVDKLWFKYLLLEESLGNQGIVRGIYTRWCSFEPGPDAWDSFIEFETRCLNFENVRNIYSKFVLVHPQIDTWLKWVRFEQTHGDISSVRTVFSFALDTLTSFSGTPLVDIERVIGSFASWEASQGEYERSRTLYRLAVERWPISEALKEQQIQFEKKFGSSKNMEDIVIAKRKAEYEQYLKSDPYHYSTWWVYIDLVEEKYQEQLTSAFQSFIELAKPKSLVKDSSWKRYIRICVRYLVYLELTINDLPTIRSVYQDILDIIPHKKFTFGKLWIMYAEFEIRQNNLLKARKILGVSLGKSPKPKVFKYYINLEIRLKEFDRVRKLYEKYIDFNPSSVQSWLDYAELEENLGDEDRSRGIYDISMSNNVGLSESDQLIVIQRYIAFETDAAEYEKARELYEKYLILSRYDVNIWINQALFESTIPTETQLIAYQQSHQDGNFDDDGEEEFSFEITPENKHHTRAIFEKAISYFKEHNEDKKRQQVLQSLLEYEKVHGNQETLEKVNARQPSLVREKVTIDNIEQESYKLDFPDDRVAQPPIARNLLALAKQWEKNSS.

14 HAT repeats span residues D43–D75, K77–K109, K111–S143, G145–R176, L178–T209, G211–S251, G253–K285, I295–E327, Q332–R364, N374–R410, N412–R443, K445–N477, A518–T550, and E584–V622.

This sequence belongs to the crooked-neck family. As to quaternary structure, associated with the spliceosome.

The protein localises to the nucleus. In terms of biological role, involved in pre-mRNA splicing and cell cycle progression. Required for the spliceosome assembly and initiation of the DNA replication. The sequence is that of Pre-mRNA-splicing factor CLF1 (CLF1) from Kluyveromyces lactis (strain ATCC 8585 / CBS 2359 / DSM 70799 / NBRC 1267 / NRRL Y-1140 / WM37) (Yeast).